The following is a 572-amino-acid chain: Glutamate--tRNA ligase (572 aa).

The 'HIGH' region motif lies at 107–117; sequence PNPDGAFHLGN.

Belongs to the class-I aminoacyl-tRNA synthetase family. Glutamate--tRNA ligase type 2 subfamily.

Its subcellular location is the cytoplasm. It catalyses the reaction tRNA(Glu) + L-glutamate + ATP = L-glutamyl-tRNA(Glu) + AMP + diphosphate. Functionally, catalyzes the attachment of glutamate to tRNA(Glu) in a two-step reaction: glutamate is first activated by ATP to form Glu-AMP and then transferred to the acceptor end of tRNA(Glu). This chain is Glutamate--tRNA ligase, found in Pyrococcus furiosus (strain ATCC 43587 / DSM 3638 / JCM 8422 / Vc1).